The primary structure comprises 109 residues: Nucleoid-associated protein AHA_2212 (109 aa).

Disordered stretches follow at residues 1–23 and 88–109; these read MFGK…RMQK and NKSK…KMPF. A compositionally biased stretch (low complexity) spans 11-23; that stretch reads MKQAQQMQERMQK.

This sequence belongs to the YbaB/EbfC family. In terms of assembly, homodimer.

It is found in the cytoplasm. It localises to the nucleoid. Functionally, binds to DNA and alters its conformation. May be involved in regulation of gene expression, nucleoid organization and DNA protection. This chain is Nucleoid-associated protein AHA_2212, found in Aeromonas hydrophila subsp. hydrophila (strain ATCC 7966 / DSM 30187 / BCRC 13018 / CCUG 14551 / JCM 1027 / KCTC 2358 / NCIMB 9240 / NCTC 8049).